Consider the following 364-residue polypeptide: Aminomethyltransferase (364 aa).

Belongs to the GcvT family. As to quaternary structure, the glycine cleavage system is composed of four proteins: P, T, L and H.

The catalysed reaction is N(6)-[(R)-S(8)-aminomethyldihydrolipoyl]-L-lysyl-[protein] + (6S)-5,6,7,8-tetrahydrofolate = N(6)-[(R)-dihydrolipoyl]-L-lysyl-[protein] + (6R)-5,10-methylene-5,6,7,8-tetrahydrofolate + NH4(+). Functionally, the glycine cleavage system catalyzes the degradation of glycine. The polypeptide is Aminomethyltransferase (Shigella sonnei (strain Ss046)).